The primary structure comprises 1976 residues: Myosin-10 (1976 aa).

Position 18 is an omega-N-methylarginine (arginine 18). The Myosin N-terminal SH3-like domain occupies 31 to 81 (TAKKLVWIPSERHGFEAASIKEERGDEVMVELAENGKKAMVNKDDIQKMNP). The Myosin motor domain occupies 85–783 (SKVEDMAELT…VLAHLEEERD (699 aa)). 178–185 (GESGAGKT) is a binding site for ATP. An N6-acetyllysine modification is found at lysine 442. The actin-binding stretch occupies residues 661–683 (LTKLMATLRNTNPNFVRCIIPNH). The 30-residue stretch at 786–815 (ITDIIIFFQAVCRGYLARKAFAKKQQQLSA) folds into the IQ domain. Residues 845–1976 (LQVTRQEEEL…VNDTQPPQSE (1132 aa)) are a coiled coil. A disordered region spans residues 1125–1175 (EDFESEKASRNKAEKQKRDLSEELEALKTELEDTLDTTAAQQELRTKREQE). The span at 1129 to 1155 (SEKASRNKAEKQKRDLSEELEALKTEL) shows a compositional bias: basic and acidic residues. Serine 1145 carries the post-translational modification Phosphoserine. Lysine 1241, lysine 1301, and lysine 1645 each carry N6-acetyllysine. 2 disordered regions span residues 1697–1718 (ASSE…DEIA) and 1874–1976 (KANA…PQSE). A compositionally biased stretch (basic and acidic residues) spans 1698–1708 (SSERARRHAEQ). Arginine 1930 is subject to Omega-N-methylarginine. Serine 1935, serine 1937, serine 1938, and serine 1939 each carry phosphoserine. Arginine 1940 is modified (omega-N-methylarginine). Phosphoserine is present on residues serine 1952 and serine 1956. The residue at position 1960 (threonine 1960) is a Phosphothreonine. Over residues 1967-1976 (VNDTQPPQSE) the composition is skewed to polar residues. Position 1975 is a phosphoserine (serine 1975).

This sequence belongs to the TRAFAC class myosin-kinesin ATPase superfamily. Myosin family. In terms of assembly, myosin is a hexameric protein that consists of 2 heavy chain subunits (MHC), 2 alkali light chain subunits (MLC) and 2 regulatory light chain subunits (MLC-2). Interacts with PLEKHG6. Interacts with ECPAS. Interacts with LARP6. Interacts with MCC. Interacts with KIF26B. Interacts with CFAP95. Post-translationally, phosphorylated by ABL2. As to expression, in newborn kidney, expressed in the mesenchyme and ureteric buds.

The protein localises to the cell projection. It is found in the lamellipodium. In terms of biological role, involved with LARP6 in the stabilization of type I collagen mRNAs for CO1A1 and CO1A2. During cell spreading, plays an important role in cytoskeleton reorganization, focal contacts formation (in the central part but not the margins of spreading cells), and lamellipodial extension; this function is mechanically antagonized by MYH9. Cellular myosin that appears to play a role in cytokinesis, cell shape, and specialized functions such as secretion and capping. This is Myosin-10 (Myh10) from Mus musculus (Mouse).